The sequence spans 151 residues: Nucleoside diphosphate kinase (151 aa).

The ATP site is built by Lys-11, Phe-59, Arg-87, Thr-93, Arg-104, and Asn-114. The active-site Pros-phosphohistidine intermediate is His-117.

It belongs to the NDK family. In terms of assembly, homotetramer. Mg(2+) is required as a cofactor.

The protein localises to the cytoplasm. The enzyme catalyses a 2'-deoxyribonucleoside 5'-diphosphate + ATP = a 2'-deoxyribonucleoside 5'-triphosphate + ADP. The catalysed reaction is a ribonucleoside 5'-diphosphate + ATP = a ribonucleoside 5'-triphosphate + ADP. Major role in the synthesis of nucleoside triphosphates other than ATP. The ATP gamma phosphate is transferred to the NDP beta phosphate via a ping-pong mechanism, using a phosphorylated active-site intermediate. This chain is Nucleoside diphosphate kinase, found in Prochlorococcus marinus (strain NATL1A).